The chain runs to 473 residues: Glutamate--tRNA ligase 2 (473 aa).

A 'HIGH' region motif is present at residues 11–21; that stretch reads PSPTGYLHIGG. Residues 113-133 show a composition bias toward basic and acidic residues; the sequence is KARAEGRPPRYDGRWRDRDPS. A disordered region spans residues 113-136; sequence KARAEGRPPRYDGRWRDRDPSEAP. The 'KMSKS' region motif lies at 240 to 244; the sequence is KLSKR. Residue Lys243 participates in ATP binding.

It belongs to the class-I aminoacyl-tRNA synthetase family. Glutamate--tRNA ligase type 1 subfamily. In terms of assembly, monomer.

Its subcellular location is the cytoplasm. It carries out the reaction tRNA(Glu) + L-glutamate + ATP = L-glutamyl-tRNA(Glu) + AMP + diphosphate. In terms of biological role, catalyzes the attachment of glutamate to tRNA(Glu) in a two-step reaction: glutamate is first activated by ATP to form Glu-AMP and then transferred to the acceptor end of tRNA(Glu). In Brucella abortus (strain S19), this protein is Glutamate--tRNA ligase 2.